The primary structure comprises 332 residues: Protein FAM131B (332 aa).

The interval 1–22 (MDSTSSLHGSSLHRPSTEQTRT) is disordered. Phosphoserine occurs at positions 47, 114, and 117. A disordered region spans residues 221 to 332 (LGPAFDDSQP…FDEEEGDANN (112 aa)). 2 stretches are compositionally biased toward basic and acidic residues: residues 272–281 (PVEEEKRPLA) and 288–302 (AGCR…REDP). Residues serine 295, serine 297, and serine 313 each carry the phosphoserine modification. Threonine 316 carries the phosphothreonine modification. Phosphoserine occurs at positions 317, 318, and 322. The span at 323 to 332 (FDEEEGDANN) shows a compositional bias: acidic residues.

Belongs to the FAM131 family.

This Rattus norvegicus (Rat) protein is Protein FAM131B (Fam131b).